Consider the following 183-residue polypeptide: Glutathione-regulated potassium-efflux system ancillary protein KefG (183 aa).

This sequence belongs to the NAD(P)H dehydrogenase (quinone) family. KefG subfamily. In terms of assembly, interacts with KefB.

The protein resides in the cell inner membrane. The enzyme catalyses a quinone + NADH + H(+) = a quinol + NAD(+). It carries out the reaction a quinone + NADPH + H(+) = a quinol + NADP(+). Regulatory subunit of a potassium efflux system that confers protection against electrophiles. Required for full activity of KefB. The protein is Glutathione-regulated potassium-efflux system ancillary protein KefG of Pectobacterium carotovorum subsp. carotovorum (strain PC1).